Reading from the N-terminus, the 123-residue chain is Probable histone H2B 4 (123 aa).

The segment at Met-1 to Ala-30 is disordered. Ser-110 is a glycosylation site (O-linked (GlcNAc) serine). Residue Lys-118 forms a Glycyl lysine isopeptide (Lys-Gly) (interchain with G-Cter in ubiquitin) linkage.

It belongs to the histone H2B family. As to quaternary structure, the nucleosome is a histone octamer containing two molecules each of H2A, H2B, H3 and H4 assembled in one H3-H4 heterotetramer and two H2A-H2B heterodimers. The octamer wraps approximately 147 bp of DNA. Monoubiquitination of Lys-118 gives a specific tag for epigenetic transcriptional activation and is also prerequisite for histone H3 'Lys-4' and 'Lys-79' methylation. Post-translationally, glcNAcylation at Ser-110 promotes monoubiquitination of Lys-118. It fluctuates in response to extracellular glucose, and associates with transcribed genes.

It is found in the nucleus. Its subcellular location is the chromosome. Core component of nucleosome. Nucleosomes wrap and compact DNA into chromatin, limiting DNA accessibility to the cellular machineries which require DNA as a template. Histones thereby play a central role in transcription regulation, DNA repair, DNA replication and chromosomal stability. DNA accessibility is regulated via a complex set of post-translational modifications of histones, also called histone code, and nucleosome remodeling. The sequence is that of Probable histone H2B 4 (his-48) from Caenorhabditis elegans.